A 146-amino-acid polypeptide reads, in one-letter code: Protein SprT-like (146 aa).

Residues 6–141 (YVKTVSIEDF…GCGLCQGKLI (136 aa)) enclose the SprT-like domain. His-64 provides a ligand contact to Zn(2+). The active site involves Glu-65. His-68 provides a ligand contact to Zn(2+).

The protein belongs to the SprT family. The cofactor is Zn(2+).

It is found in the cytoplasm. The protein is Protein SprT-like of Streptococcus thermophilus (strain CNRZ 1066).